Consider the following 182-residue polypeptide: MRILGIDPGLLTTGFGVVDSDGHALSYVASGTISTRHLGSGNLPARLKVLFDGIAEIAARYQPDASAVEIIFVNVNPQSTLLLGQARGACVTSLVNSNLSVAEYTALQMKKAVAGHGQAAKAQVQEMVKRLLDLPGLPGADAADALGIAITHAQVGRSMARLAEAAELSKTHAGTYRQGRSR.

Active-site residues include D7, E69, and D141. Residues D7, E69, and D141 each contribute to the Mg(2+) site.

The protein belongs to the RuvC family. Homodimer which binds Holliday junction (HJ) DNA. The HJ becomes 2-fold symmetrical on binding to RuvC with unstacked arms; it has a different conformation from HJ DNA in complex with RuvA. In the full resolvosome a probable DNA-RuvA(4)-RuvB(12)-RuvC(2) complex forms which resolves the HJ. Mg(2+) serves as cofactor.

The protein resides in the cytoplasm. It carries out the reaction Endonucleolytic cleavage at a junction such as a reciprocal single-stranded crossover between two homologous DNA duplexes (Holliday junction).. Its function is as follows. The RuvA-RuvB-RuvC complex processes Holliday junction (HJ) DNA during genetic recombination and DNA repair. Endonuclease that resolves HJ intermediates. Cleaves cruciform DNA by making single-stranded nicks across the HJ at symmetrical positions within the homologous arms, yielding a 5'-phosphate and a 3'-hydroxyl group; requires a central core of homology in the junction. The consensus cleavage sequence is 5'-(A/T)TT(C/G)-3'. Cleavage occurs on the 3'-side of the TT dinucleotide at the point of strand exchange. HJ branch migration catalyzed by RuvA-RuvB allows RuvC to scan DNA until it finds its consensus sequence, where it cleaves and resolves the cruciform DNA. In Variovorax paradoxus (strain S110), this protein is Crossover junction endodeoxyribonuclease RuvC.